The primary structure comprises 275 residues: Glutamate 5-kinase (275 aa).

Lysine 17 is a binding site for ATP. 3 residues coordinate substrate: serine 57, aspartate 144, and asparagine 160. ATP contacts are provided by residues 180 to 181 (SD) and 222 to 228 (TGGMLSK).

The protein belongs to the glutamate 5-kinase family.

The protein localises to the cytoplasm. It carries out the reaction L-glutamate + ATP = L-glutamyl 5-phosphate + ADP. The protein operates within amino-acid biosynthesis; L-proline biosynthesis; L-glutamate 5-semialdehyde from L-glutamate: step 1/2. Its function is as follows. Catalyzes the transfer of a phosphate group to glutamate to form L-glutamate 5-phosphate. This is Glutamate 5-kinase from Streptococcus pyogenes serotype M12 (strain MGAS2096).